The following is a 351-amino-acid chain: Glycerol-1-phosphate dehydrogenase [NAD(P)+] (351 aa).

NAD(+)-binding positions include glycine 97–aspartate 101 and threonine 119–serine 122. A substrate-binding site is contributed by aspartate 124. Serine 128 contacts NAD(+). Aspartate 171 contacts substrate. Zn(2+) is bound by residues aspartate 171 and histidine 251. Histidine 255 is a substrate binding site. Position 267 (histidine 267) interacts with Zn(2+).

This sequence belongs to the glycerol-1-phosphate dehydrogenase family. In terms of assembly, homodimer. Zn(2+) is required as a cofactor.

The protein localises to the cytoplasm. The catalysed reaction is sn-glycerol 1-phosphate + NAD(+) = dihydroxyacetone phosphate + NADH + H(+). It carries out the reaction sn-glycerol 1-phosphate + NADP(+) = dihydroxyacetone phosphate + NADPH + H(+). Its pathway is membrane lipid metabolism; glycerophospholipid metabolism. In terms of biological role, catalyzes the NAD(P)H-dependent reduction of dihydroxyacetonephosphate (DHAP or glycerone phosphate) to glycerol 1-phosphate (G1P). The G1P thus generated is used as the glycerophosphate backbone of phospholipids in the cellular membranes of Archaea. The sequence is that of Glycerol-1-phosphate dehydrogenase [NAD(P)+] from Saccharolobus islandicus (strain Y.N.15.51 / Yellowstone #2) (Sulfolobus islandicus).